The primary structure comprises 42 residues: Cytochrome b559 subunit beta (42 aa).

Residues 17–33 form a helical membrane-spanning segment; the sequence is WLAIHGLAVPTVFFLGA. H21 lines the heme pocket.

It belongs to the PsbE/PsbF family. Heterodimer of an alpha subunit and a beta subunit. PSII is composed of 1 copy each of membrane proteins PsbA, PsbB, PsbC, PsbD, PsbE, PsbF, PsbH, PsbI, PsbJ, PsbK, PsbL, PsbM, PsbT, PsbX, PsbY, PsbZ, Psb30/Ycf12, at least 3 peripheral proteins of the oxygen-evolving complex and a large number of cofactors. It forms dimeric complexes. Heme b serves as cofactor.

It localises to the plastid. Its subcellular location is the chloroplast thylakoid membrane. This b-type cytochrome is tightly associated with the reaction center of photosystem II (PSII). PSII is a light-driven water:plastoquinone oxidoreductase that uses light energy to abstract electrons from H(2)O, generating O(2) and a proton gradient subsequently used for ATP formation. It consists of a core antenna complex that captures photons, and an electron transfer chain that converts photonic excitation into a charge separation. This is Cytochrome b559 subunit beta from Guillardia theta (Cryptophyte).